The chain runs to 401 residues: 2,3,4,5-tetrahydropyridine-2,6-dicarboxylate N-succinyltransferase (401 aa).

The active-site Acyl-anhydride intermediate is the Glu269. Succinyl-CoA contacts are provided by residues Arg271, Gly286, Ser289, Ala312, 327–328, Gly335, and Lys364; that span reads DA.

This sequence belongs to the type 2 tetrahydrodipicolinate N-succinyltransferase family. As to quaternary structure, homotrimer.

It is found in the cytoplasm. The catalysed reaction is (S)-2,3,4,5-tetrahydrodipicolinate + succinyl-CoA + H2O = (S)-2-succinylamino-6-oxoheptanedioate + CoA. Its pathway is amino-acid biosynthesis; L-lysine biosynthesis via DAP pathway; LL-2,6-diaminopimelate from (S)-tetrahydrodipicolinate (succinylase route): step 1/3. Catalyzes the conversion of the cyclic tetrahydrodipicolinate (THDP) into the acyclic N-succinyl-L-2-amino-6-oxopimelate using succinyl-CoA. The polypeptide is 2,3,4,5-tetrahydropyridine-2,6-dicarboxylate N-succinyltransferase (Helicobacter pylori (strain ATCC 700392 / 26695) (Campylobacter pylori)).